Reading from the N-terminus, the 114-residue chain is T cell receptor beta variable 19 (114 aa).

The first 21 residues, 1–21, serve as a signal peptide directing secretion; it reads MSNQVLCCVVLCLLGANTVDG. Residues 22–114 enclose the Ig-like domain; sequence GITQSPKYLF…TAFYLCASSI (93 aa). N37 carries N-linked (GlcNAc...) asparagine glycosylation. A disulfide bond links C42 and C110.

As to quaternary structure, alpha-beta TR is a heterodimer composed of an alpha and beta chain; disulfide-linked. The alpha-beta TR is associated with the transmembrane signaling CD3 coreceptor proteins to form the TR-CD3 (TcR or TCR). The assembly of alpha-beta TR heterodimers with CD3 occurs in the endoplasmic reticulum where a single alpha-beta TR heterodimer associates with one CD3D-CD3E heterodimer, one CD3G-CD3E heterodimer and one CD247 homodimer forming a stable octameric structure. CD3D-CD3E and CD3G-CD3E heterodimers preferentially associate with TR alpha and TR beta chains, respectively. The association of the CD247 homodimer is the last step of TcR assembly in the endoplasmic reticulum and is required for transport to the cell surface. In terms of assembly, (Microbial infection) Interacts with Staphylococcus aureus enterotoxin type B/SEB.

The protein resides in the cell membrane. In terms of biological role, v region of the variable domain of T cell receptor (TR) beta chain that participates in the antigen recognition. Alpha-beta T cell receptors are antigen specific receptors which are essential to the immune response and are present on the cell surface of T lymphocytes. Recognize peptide-major histocompatibility (MH) (pMH) complexes that are displayed by antigen presenting cells (APC), a prerequisite for efficient T cell adaptive immunity against pathogens. Binding of alpha-beta TR to pMH complex initiates TR-CD3 clustering on the cell surface and intracellular activation of LCK that phosphorylates the ITAM motifs of CD3G, CD3D, CD3E and CD247 enabling the recruitment of ZAP70. In turn ZAP70 phosphorylates LAT, which recruits numerous signaling molecules to form the LAT signalosome. The LAT signalosome propagates signal branching to three major signaling pathways, the calcium, the mitogen-activated protein kinase (MAPK) kinase and the nuclear factor NF-kappa-B (NF-kB) pathways, leading to the mobilization of transcription factors that are critical for gene expression and essential for T cell growth and differentiation. The T cell repertoire is generated in the thymus, by V-(D)-J rearrangement. This repertoire is then shaped by intrathymic selection events to generate a peripheral T cell pool of self-MH restricted, non-autoaggressive T cells. Post-thymic interaction of alpha-beta TR with the pMH complexes shapes TR structural and functional avidity. This chain is T cell receptor beta variable 19, found in Homo sapiens (Human).